A 348-amino-acid chain; its full sequence is tRNA N6-adenosine threonylcarbamoyltransferase (348 aa).

The Fe cation site is built by histidine 111 and histidine 115. Substrate is bound by residues leucine 134–glycine 138, aspartate 167, glycine 180, and asparagine 277. Position 305 (aspartate 305) interacts with Fe cation.

The protein belongs to the KAE1 / TsaD family. It depends on Fe(2+) as a cofactor.

It is found in the cytoplasm. It carries out the reaction L-threonylcarbamoyladenylate + adenosine(37) in tRNA = N(6)-L-threonylcarbamoyladenosine(37) in tRNA + AMP + H(+). In terms of biological role, required for the formation of a threonylcarbamoyl group on adenosine at position 37 (t(6)A37) in tRNAs that read codons beginning with adenine. Is involved in the transfer of the threonylcarbamoyl moiety of threonylcarbamoyl-AMP (TC-AMP) to the N6 group of A37, together with TsaE and TsaB. TsaD likely plays a direct catalytic role in this reaction. This is tRNA N6-adenosine threonylcarbamoyltransferase from Haemophilus ducreyi (strain 35000HP / ATCC 700724).